A 243-amino-acid polypeptide reads, in one-letter code: Orotidine 5'-phosphate decarboxylase (243 aa).

Residues aspartate 19, lysine 41, aspartate 69 to threonine 78, threonine 124, arginine 185, glutamine 194, glycine 214, and arginine 215 each bind substrate. Lysine 71 (proton donor) is an active-site residue.

This sequence belongs to the OMP decarboxylase family. Type 1 subfamily. As to quaternary structure, homodimer.

It carries out the reaction orotidine 5'-phosphate + H(+) = UMP + CO2. The protein operates within pyrimidine metabolism; UMP biosynthesis via de novo pathway; UMP from orotate: step 2/2. Catalyzes the decarboxylation of orotidine 5'-monophosphate (OMP) to uridine 5'-monophosphate (UMP). This is Orotidine 5'-phosphate decarboxylase from Xanthomonas campestris pv. campestris (strain 8004).